A 222-amino-acid chain; its full sequence is MNSNVENLPPHIIRLVYKEVTTLTADPPDGIKVFPNEEDLTDLQVTIEGPEGTPYAGGLFRMKLLLGKDFPASPPKGYFLTKIFHPNVGANGEICVNVLKRDWTAELGIRHVLLTIKCLLIHPNPESALNEEAGRLLLENYEEYAARARLLTEIHGGAGGPSGRAEAGRALASGTEASSTDPGAPGGPGGAEGPMAKKHAGERDKKLAAKKKTDKKRALRRL.

M1 carries the N-acetylmethionine modification. The 147-residue stretch at 11 to 157 (HIIRLVYKEV…ARLLTEIHGG (147 aa)) folds into the UBC core domain. Catalysis depends on C95, which acts as the Glycyl thioester intermediate. The segment at 156-222 (GGAGGPSGRA…TDKKRALRRL (67 aa)) is disordered. Residue S173 is modified to Phosphoserine. A compositionally biased stretch (basic residues) spans 208 to 222 (AAKKKTDKKRALRRL).

It belongs to the ubiquitin-conjugating enzyme family. In terms of assembly, component of the APC/C complex, composed of at least 14 distinct subunits that assemble into a complex of at least 19 chains with a combined molecular mass of around 1.2 MDa. Within this complex, directly interacts with ANAPC2 and ANAPC4. Interacts with CDC20, FZR1/CDH1 and VHL. In terms of processing, autoubiquitinated by the APC/C complex during G1, leading to its degradation by the proteasome.

It catalyses the reaction S-ubiquitinyl-[E1 ubiquitin-activating enzyme]-L-cysteine + [E2 ubiquitin-conjugating enzyme]-L-cysteine = [E1 ubiquitin-activating enzyme]-L-cysteine + S-ubiquitinyl-[E2 ubiquitin-conjugating enzyme]-L-cysteine.. It functions in the pathway protein modification; protein ubiquitination. Its function is as follows. Accepts ubiquitin from the E1 complex and catalyzes its covalent attachment to other proteins. Catalyzes 'Lys-11'-linked polyubiquitination. Acts as an essential factor of the anaphase promoting complex/cyclosome (APC/C), a cell cycle-regulated ubiquitin ligase that controls progression through mitosis. Acts by specifically elongating 'Lys-11'-linked polyubiquitin chains initiated by the E2 enzyme UBE2C/UBCH10 on APC/C substrates, enhancing the degradation of APC/C substrates by the proteasome and promoting mitotic exit. Also acts by elongating ubiquitin chains initiated by the E2 enzyme UBE2D1/UBCH5 in vitro; it is however unclear whether UBE2D1/UBCH5 acts as an E2 enzyme for the APC/C in vivo. Also involved in ubiquitination and subsequent degradation of VHL, resulting in an accumulation of HIF1A. In vitro able to promote polyubiquitination using all 7 ubiquitin Lys residues, except 'Lys-48'-linked polyubiquitination. In Homo sapiens (Human), this protein is Ubiquitin-conjugating enzyme E2 S (UBE2S).